The primary structure comprises 578 residues: Glucans biosynthesis protein G (578 aa).

The signal sequence occupies residues 1–37 (MIVSPCIAPRIPGTRLRKAMLAGVALVGLLSAGQLWA). Residues 511 to 578 (VPVEAPKPAK…TWSYQLPADE (68 aa)) form a disordered region. Basic and acidic residues predominate over residues 517-543 (KPAKDSKQDKAAAKHAHAKAEKAKAEQ). Residues 544–554 (PAEQPAADAAS) show a composition bias toward low complexity.

Belongs to the OpgD/OpgG family.

Its subcellular location is the periplasm. It participates in glycan metabolism; osmoregulated periplasmic glucan (OPG) biosynthesis. Involved in the biosynthesis of osmoregulated periplasmic glucans (OPGs). In Pseudomonas entomophila (strain L48), this protein is Glucans biosynthesis protein G.